Consider the following 146-residue polypeptide: Anti-sigma F factor (146 aa).

It belongs to the anti-sigma-factor family.

The catalysed reaction is L-seryl-[protein] + ATP = O-phospho-L-seryl-[protein] + ADP + H(+). The enzyme catalyses L-threonyl-[protein] + ATP = O-phospho-L-threonyl-[protein] + ADP + H(+). In terms of biological role, binds to sigma F and blocks its ability to form an RNA polymerase holoenzyme (E-sigma F). Phosphorylates SpoIIAA on a serine residue. This phosphorylation may enable SpoIIAA to act as an anti-anti-sigma factor that counteracts SpoIIAB and thus releases sigma F from inhibition. In Geobacillus stearothermophilus (Bacillus stearothermophilus), this protein is Anti-sigma F factor.